Reading from the N-terminus, the 185-residue chain is Regulator of rDNA transcription protein 13 (185 aa).

3 WD repeats span residues 9 to 48 (GHTD…NNGE), 71 to 108 (GHRA…LKHF), and 111 to 148 (HTQL…LVRS).

May be involved in the modulation of rDNA transcription. This is Regulator of rDNA transcription protein 13 (RRT13) from Saccharomyces cerevisiae (strain ATCC 204508 / S288c) (Baker's yeast).